The following is a 210-amino-acid chain: T-cell surface glycoprotein CD8 beta chain (210 aa).

Residues 1-21 form the signal peptide; the sequence is MQPGLWLLLATQLAALRGSSV. Residues 22–132 form the Ig-like V-type domain; sequence LQQAPGSVMV…ELTFGKGTRL (111 aa). At 22–170 the chain is on the extracellular side; sequence LQQAPGSVMV…VTQKGPSCGL (149 aa). Cysteines 41 and 116 form a disulfide. An N-linked (GlcNAc...) asparagine glycan is attached at asparagine 102. Residues 139 to 161 form a disordered region; the sequence is PTNSQPTKKPTPRKKMCRPPSPV. A helical membrane pass occupies residues 171 to 191; it reads LTLGLLVAGVLVLLVSLGVAI. Over 192–210 the chain is Cytoplasmic; it reads HLYRLKRRARLRLLKQFYK.

As to quaternary structure, forms disulfide-linked heterodimers with CD8A at the cell surface. Interacts with CD3D; this interaction couples TCR-CD3 with CD8. Interacts with LCK. Post-translationally, phosphorylated as a consequence of T-cell activation. Palmitoylated at the cytoplasmic tail and thereby targets the heterodimer CD8A/CD8B to lipid rafts unlike CD8A homodimers.

It is found in the cell membrane. In terms of biological role, integral membrane glycoprotein that plays an essential role in the immune response and serves multiple functions in responses against both external and internal offenses. In T-cells, functions primarily as a coreceptor for MHC class I molecule:peptide complex. The antigens presented by class I peptides are derived from cytosolic proteins while class II derived from extracellular proteins. Interacts simultaneously with the T-cell receptor (TCR) and the MHC class I proteins presented by antigen presenting cells (APCs). In turn, recruits the Src kinase LCK to the vicinity of the TCR-CD3 complex. A palmitoylation site in the cytoplasmic tail of CD8B chain contributes to partitioning of CD8 into the plasma membrane lipid rafts where signaling proteins are enriched. Once LCK recruited, it initiates different intracellular signaling pathways by phosphorylating various substrates ultimately leading to lymphokine production, motility, adhesion and activation of cytotoxic T-lymphocytes (CTLs). Additionally, plays a critical role in thymic selection of CD8+ T-cells. The chain is T-cell surface glycoprotein CD8 beta chain (CD8B) from Felis catus (Cat).